The chain runs to 186 residues: Ribosome-recycling factor (186 aa).

This sequence belongs to the RRF family.

Its subcellular location is the cytoplasm. In terms of biological role, responsible for the release of ribosomes from messenger RNA at the termination of protein biosynthesis. May increase the efficiency of translation by recycling ribosomes from one round of translation to another. The polypeptide is Ribosome-recycling factor (Burkholderia cenocepacia (strain HI2424)).